We begin with the raw amino-acid sequence, 315 residues long: Zinc finger transcription factor ref-2 (315 aa).

The C2H2-type 1; atypical zinc finger occupies 83 to 112; it reads VQCLWETNGQVCMHVCQNSGELSTHISSNH. The C2H2-type 2; degenerate zinc-finger motif lies at 124 to 146; sequence KGCDREFKMFKAKYKLVNHMRVH. 3 consecutive C2H2-type zinc fingers follow at residues 152–174, 180–204, and 210–234; these read FLCD…KRIH, FQCT…MHVH, and YSCM…TKVH. A disordered region spans residues 225–270; the sequence is SSLRKHTKVHENEKKSQLSPEHDESSDSGNASIGTPTTDESLTFSP. The span at 233-249 shows a compositional bias: basic and acidic residues; sequence VHENEKKSQLSPEHDES. A compositionally biased stretch (polar residues) spans 251 to 270; sequence DSGNASIGTPTTDESLTFSP.

Interacts with TCF transcription factor pop-1; the interaction is direct and facilitates transcriptional activation; transcription may be repressed by beta-catenin/sys-1.

It localises to the nucleus. The protein resides in the cytoplasm. Its function is as follows. Transcription factor. Modulates expression of target genes by binding to regulatory elements. Required for normal cell division timing and cell positioning in anterior lineages, acting in a cell-autonomous manner. Required for development, fusion and fate of cells of the ventral epidermis, the Pn.p cells, during larval development; acts in concert with homeobox genes lin-39 and mab-5. Required for the specification of the AIY interneuron. In complex with TCF transcription factor pop-1, positively modulates expression of LIM/homeobox protein ttx-3 in anterior daughter cells of the SMDD/AIY neuron lineage. The protein is Zinc finger transcription factor ref-2 of Caenorhabditis elegans.